Consider the following 316-residue polypeptide: Beta-ketoacyl-[acyl-carrier-protein] synthase III (316 aa).

Active-site residues include cysteine 112 and histidine 243. Residues 244–248 are ACP-binding; that stretch reads QANIR. Residue asparagine 273 is part of the active site.

The protein belongs to the thiolase-like superfamily. FabH family. Homodimer.

It localises to the cytoplasm. The enzyme catalyses malonyl-[ACP] + acetyl-CoA + H(+) = 3-oxobutanoyl-[ACP] + CO2 + CoA. Its pathway is lipid metabolism; fatty acid biosynthesis. In terms of biological role, catalyzes the condensation reaction of fatty acid synthesis by the addition to an acyl acceptor of two carbons from malonyl-ACP. Catalyzes the first condensation reaction which initiates fatty acid synthesis and may therefore play a role in governing the total rate of fatty acid production. Possesses both acetoacetyl-ACP synthase and acetyl transacylase activities. Its substrate specificity determines the biosynthesis of branched-chain and/or straight-chain of fatty acids. This Haemophilus ducreyi (strain 35000HP / ATCC 700724) protein is Beta-ketoacyl-[acyl-carrier-protein] synthase III.